Reading from the N-terminus, the 121-residue chain is Small ribosomal subunit protein uS13 (121 aa).

The interval 94 to 121 is disordered; it reads DLPVRGQRTKTNARTRKGPRKSGVQLKK. Residues 100–121 show a composition bias toward basic residues; the sequence is QRTKTNARTRKGPRKSGVQLKK.

It belongs to the universal ribosomal protein uS13 family. In terms of assembly, part of the 30S ribosomal subunit. Forms a loose heterodimer with protein S19. Forms two bridges to the 50S subunit in the 70S ribosome.

In terms of biological role, located at the top of the head of the 30S subunit, it contacts several helices of the 16S rRNA. In the 70S ribosome it contacts the 23S rRNA (bridge B1a) and protein L5 of the 50S subunit (bridge B1b), connecting the 2 subunits; these bridges are implicated in subunit movement. Contacts the tRNAs in the A and P-sites. The polypeptide is Small ribosomal subunit protein uS13 (Polynucleobacter necessarius subsp. necessarius (strain STIR1)).